A 396-amino-acid polypeptide reads, in one-letter code: Elongation factor Tu 1 (396 aa).

The region spanning 10–206 is the tr-type G domain; the sequence is KPHVNVGTIG…ALDTYIPTPE (197 aa). Residues 19-26 are G1; it reads GHVDHGKT. 19 to 26 is a binding site for GTP; sequence GHVDHGKT. T26 contacts Mg(2+). Residues 60–64 form a G2 region; sequence GITIN. The G3 stretch occupies residues 81 to 84; the sequence is DCPG. Residues 81–85 and 136–139 contribute to the GTP site; these read DCPGH and NKAD. The interval 136–139 is G4; it reads NKAD. Residues 174–176 are G5; that stretch reads SAK.

It belongs to the TRAFAC class translation factor GTPase superfamily. Classic translation factor GTPase family. EF-Tu/EF-1A subfamily. In terms of assembly, monomer.

The protein resides in the cytoplasm. It carries out the reaction GTP + H2O = GDP + phosphate + H(+). GTP hydrolase that promotes the GTP-dependent binding of aminoacyl-tRNA to the A-site of ribosomes during protein biosynthesis. In Methylobacillus flagellatus (strain ATCC 51484 / DSM 6875 / VKM B-1610 / KT), this protein is Elongation factor Tu 1.